Here is a 342-residue protein sequence, read N- to C-terminus: GTPase Obg (342 aa).

Residues 1 to 159 (MQFIDQAKIE…KQLRLELKLL (159 aa)) enclose the Obg domain. Residues 160–330 (AEVGIIGLPN…MLQEIWGILD (171 aa)) enclose the OBG-type G domain. Residues 166–173 (GLPNAGKS), 191–195 (FTTLI), 213–216 (DIPG), 280–283 (NKID), and 311–313 (SAV) each bind GTP. Serine 173 and threonine 193 together coordinate Mg(2+).

Belongs to the TRAFAC class OBG-HflX-like GTPase superfamily. OBG GTPase family. As to quaternary structure, monomer. It depends on Mg(2+) as a cofactor.

It localises to the cytoplasm. Its function is as follows. An essential GTPase which binds GTP, GDP and possibly (p)ppGpp with moderate affinity, with high nucleotide exchange rates and a fairly low GTP hydrolysis rate. Plays a role in control of the cell cycle, stress response, ribosome biogenesis and in those bacteria that undergo differentiation, in morphogenesis control. The sequence is that of GTPase Obg from Nostoc punctiforme (strain ATCC 29133 / PCC 73102).